Consider the following 505-residue polypeptide: Pleckstrin homology domain-containing family D member 1 (505 aa).

Residues 28-136 enclose the PH domain; the sequence is KVQLYGVLWK…WLEMLQESGK (109 aa). Residues 146–391 are a coiled coil; that stretch reads EAMIKSLEAQ…KVRNKEKEER (246 aa). Positions 264 to 284 are disordered; sequence DKNQPQPLTNQSEQPPATDGL. Residues 267-278 show a composition bias toward polar residues; it reads QPQPLTNQSEQP. Residue Arg502 is modified to Omega-N-methylarginine.

Belongs to the PLEKHD1 family.

The polypeptide is Pleckstrin homology domain-containing family D member 1 (Plekhd1) (Rattus norvegicus (Rat)).